The sequence spans 704 residues: Elongation factor G (704 aa).

One can recognise a tr-type G domain in the interval 8-291; it reads DKVRNIGIMA…TVVECLPSPV (284 aa). Residues 17 to 24, 90 to 94, and 144 to 147 contribute to the GTP site; these read AHIDAGKT, DTPGH, and NKMD.

Belongs to the TRAFAC class translation factor GTPase superfamily. Classic translation factor GTPase family. EF-G/EF-2 subfamily.

The protein localises to the cytoplasm. Catalyzes the GTP-dependent ribosomal translocation step during translation elongation. During this step, the ribosome changes from the pre-translocational (PRE) to the post-translocational (POST) state as the newly formed A-site-bound peptidyl-tRNA and P-site-bound deacylated tRNA move to the P and E sites, respectively. Catalyzes the coordinated movement of the two tRNA molecules, the mRNA and conformational changes in the ribosome. The chain is Elongation factor G from Prosthecochloris aestuarii (strain DSM 271 / SK 413).